The chain runs to 340 residues: MISVAVNGYGTIGKRVADAILKQPDMRLVGVAKTSPNYEAFIAHRKGIKIYVPQQSIKKFEEAGIPVAGTIEDLVKASDIVVDTTPNGVGAQYKPIYQQFQRNAIFQGGEKAEVADISFSALCNYDEALGKKYIRVVSCNTTALLRTICTINKVTKVEKVRATIVRRAADQKEVKKGPINSLVPDPATVPSHHAKDVNSVIKNLDIVTMAVIAPTTLMHMHFINITLKDKVEKKDVLSVLENTPRIVLISSKYDAEATAELVEVARDLKRERNDIPEVMVFDDSVYVKDNEVMLMYAVHQESIVVPENVDAIRASTRLMSAEDSIRITNESLGILKGYLI.

NAD(+) contacts are provided by residues 11-12 and Gly109; that span reads TI. 138–140 is a D-glyceraldehyde 3-phosphate binding site; that stretch reads SCN. Catalysis depends on Cys139, which acts as the Nucleophile. Arg167 contributes to the NAD(+) binding site. 193–194 lines the D-glyceraldehyde 3-phosphate pocket; that stretch reads HA. Gln300 serves as a coordination point for NAD(+).

Belongs to the glyceraldehyde-3-phosphate dehydrogenase family. Homotetramer.

It is found in the cytoplasm. The catalysed reaction is D-glyceraldehyde 3-phosphate + phosphate + NADP(+) = (2R)-3-phospho-glyceroyl phosphate + NADPH + H(+). It catalyses the reaction D-glyceraldehyde 3-phosphate + phosphate + NAD(+) = (2R)-3-phospho-glyceroyl phosphate + NADH + H(+). It functions in the pathway carbohydrate degradation; glycolysis; pyruvate from D-glyceraldehyde 3-phosphate: step 1/5. This chain is Glyceraldehyde-3-phosphate dehydrogenase, found in Saccharolobus islandicus (strain L.S.2.15 / Lassen #1) (Sulfolobus islandicus).